We begin with the raw amino-acid sequence, 471 residues long: MIPVRGFEDKTVAVFGLGRTGLTAARALIAGGAKVALWDEKPASREAAAAEGFAVVDLQAADWSQFAALMLSPGVPLSHPKPHWTVEKARAAGVEVLGDVELFARTVNAAPAHKRPKIIAITGTNGKSTTTALIGHLCASAGRDTRVGGNIGLGVLGLEDMHGGAVYVLELSSYQLDLTSSLKPDAVVLLNISPDHLDRHGGMDGYIAAKRRIFLNQGKGDTAIIGVDDAWCQQICTEITAANRRTIWPISAGKAMGRGVYALQGVLYDATGERVVEVADILRARSLPGRHNWQNAAAAYAAARAIGISMQDAVDGLMTFPGLAHRMETVGKIGKVRFVNDSKATNADAARQAMSSYPKFYWIAGGVAKAGGIDDLKDLFPRIAKAYLIGEAAEPFSWTLAGKAECVLSGTLEKAVQQAYADAAASGEEAIVLLSPACASFDQFSDFEARGEAFRAAVNGLTAGGGKAAVA.

123–129 provides a ligand contact to ATP; that stretch reads GTNGKST.

Belongs to the MurCDEF family.

Its subcellular location is the cytoplasm. It carries out the reaction UDP-N-acetyl-alpha-D-muramoyl-L-alanine + D-glutamate + ATP = UDP-N-acetyl-alpha-D-muramoyl-L-alanyl-D-glutamate + ADP + phosphate + H(+). It participates in cell wall biogenesis; peptidoglycan biosynthesis. Cell wall formation. Catalyzes the addition of glutamate to the nucleotide precursor UDP-N-acetylmuramoyl-L-alanine (UMA). The polypeptide is UDP-N-acetylmuramoylalanine--D-glutamate ligase (Caulobacter vibrioides (strain ATCC 19089 / CIP 103742 / CB 15) (Caulobacter crescentus)).